A 145-amino-acid polypeptide reads, in one-letter code: Cytochrome c2 (145 aa).

An N-terminal signal peptide occupies residues 1–21; the sequence is MKFQVKALAAIAAFAALPALA. Gln-22 carries the post-translational modification Pyrrolidone carboxylic acid. Heme c-binding residues include Cys-36, Cys-39, His-40, and Met-121.

The protein belongs to the cytochrome c family. Post-translationally, binds 1 heme c group covalently per subunit.

The protein localises to the periplasm. Its function is as follows. Cytochrome c2 is found mainly in purple, non-sulfur, photosynthetic bacteria where it functions as the electron donor to the oxidized bacteriochlorophyll in the photophosphorylation pathway. However, it may also have a role in the respiratory chain and is found in some non-photosynthetic bacteria. The sequence is that of Cytochrome c2 (cycA) from Cereibacter sphaeroides (strain ATCC 17023 / DSM 158 / JCM 6121 / CCUG 31486 / LMG 2827 / NBRC 12203 / NCIMB 8253 / ATH 2.4.1.) (Rhodobacter sphaeroides).